The primary structure comprises 104 residues: Inner membrane protein YjeO (104 aa).

Residues 1–5 are Cytoplasmic-facing; that stretch reads MSARM. A helical transmembrane segment spans residues 6-26; the sequence is FVLCCIWFIVAFLWITITSAL. At 27–52 the chain is on the periplasmic side; that stretch reads DKEWMIDGRGINNVCDVLMYLEEDDT. The chain crosses the membrane as a helical span at residues 53-73; sequence RDVGVIMTLPLFFPFLWFALW. Residues 74 to 77 lie on the Cytoplasmic side of the membrane; the sequence is RKKR. The helical transmembrane segment at 78 to 98 threads the bilayer; it reads GWFMYATALAIFGYWLWQFFL. Residues 99 to 104 lie on the Periplasmic side of the membrane; sequence RYQFCL.

The protein localises to the cell inner membrane. The protein is Inner membrane protein YjeO (yjeO) of Escherichia coli (strain K12).